Here is a 394-residue protein sequence, read N- to C-terminus: D-mannose isomerase (394 aa).

Active-site proton donor/acceptor residues include histidine 251 and histidine 380.

It belongs to the N-acylglucosamine 2-epimerase family. As to quaternary structure, monomer.

The catalysed reaction is D-mannose = D-fructose. It carries out the reaction D-lyxose = D-xylulose. Functionally, catalyzes the reversible isomerization of D-mannose to D-fructose. Can also isomerize D-lyxose, with lower efficiency. In longer reaction with a higher concentration of enzyme, it can isomerize 4-OH D-mannose derivatives (D-talose and 4-O-monosaccharyl-D-mannose). Cannot use D-glucose. This Marinomonas mediterranea (strain ATCC 700492 / JCM 21426 / NBRC 103028 / MMB-1) protein is D-mannose isomerase.